We begin with the raw amino-acid sequence, 55 residues long: Large ribosomal subunit protein bL33 (55 aa).

It belongs to the bacterial ribosomal protein bL33 family.

This Roseobacter denitrificans (strain ATCC 33942 / OCh 114) (Erythrobacter sp. (strain OCh 114)) protein is Large ribosomal subunit protein bL33.